A 360-amino-acid polypeptide reads, in one-letter code: Phospho-N-acetylmuramoyl-pentapeptide-transferase (360 aa).

Helical transmembrane passes span 27–47, 73–93, 94–114, 132–152, 168–188, 199–219, 236–256, 263–283, 288–308, and 338–358; these read IVSLLTALVISLWMGPHMIAW, TMGGVMILVAIIVSVLMWANL, SNPYVWCVLLVLAGYGAVGFV, WKYFWQSVIALVVAFTMYSIG, VMPQLGLLYVALAYFVIVGTS, GLAIMPTVFVAAGFALVAWAT, ASELVIVCTAIVGAGLGFLWF, VFMGDVGSLALGGALGTIAVL, FLLVIMGGVFVVETLSVILQV, and VIVRFWIISLMLVLIGLATLK.

It belongs to the glycosyltransferase 4 family. MraY subfamily. Requires Mg(2+) as cofactor.

It localises to the cell inner membrane. The catalysed reaction is UDP-N-acetyl-alpha-D-muramoyl-L-alanyl-gamma-D-glutamyl-meso-2,6-diaminopimeloyl-D-alanyl-D-alanine + di-trans,octa-cis-undecaprenyl phosphate = di-trans,octa-cis-undecaprenyl diphospho-N-acetyl-alpha-D-muramoyl-L-alanyl-D-glutamyl-meso-2,6-diaminopimeloyl-D-alanyl-D-alanine + UMP. It participates in cell wall biogenesis; peptidoglycan biosynthesis. Functionally, catalyzes the initial step of the lipid cycle reactions in the biosynthesis of the cell wall peptidoglycan: transfers peptidoglycan precursor phospho-MurNAc-pentapeptide from UDP-MurNAc-pentapeptide onto the lipid carrier undecaprenyl phosphate, yielding undecaprenyl-pyrophosphoryl-MurNAc-pentapeptide, known as lipid I. The chain is Phospho-N-acetylmuramoyl-pentapeptide-transferase from Pectobacterium atrosepticum (strain SCRI 1043 / ATCC BAA-672) (Erwinia carotovora subsp. atroseptica).